A 73-amino-acid chain; its full sequence is DNA-directed RNA polymerase subunit epsilon (73 aa).

It belongs to the RNA polymerase subunit epsilon family. In terms of assembly, RNAP is composed of a core of 2 alpha, a beta and a beta' subunit. The core is associated with a delta subunit, and at least one of epsilon or omega. When a sigma factor is associated with the core the holoenzyme is formed, which can initiate transcription.

It catalyses the reaction RNA(n) + a ribonucleoside 5'-triphosphate = RNA(n+1) + diphosphate. In terms of biological role, a non-essential component of RNA polymerase (RNAP). This Lactobacillus acidophilus (strain ATCC 700396 / NCK56 / N2 / NCFM) protein is DNA-directed RNA polymerase subunit epsilon.